The sequence spans 56 residues: MSGSGAMLLGLLILVAMATSLDTREICWHQSECDDPNEWCCIMGTSYGSCQPVCRP.

Positions 1 to 23 (MSGSGAMLLGLLILVAMATSLDT) are cleaved as a signal peptide. 3 disulfides stabilise this stretch: C27/C41, C33/C50, and C40/C54.

As to expression, expressed by the venom duct.

It localises to the secreted. Functionally, probable neurotoxin. The polypeptide is Conotoxin Cal6.41c (Californiconus californicus (California cone)).